Consider the following 307-residue polypeptide: Acyl transferase (307 aa).

Residues Ser-116, Asp-213, and His-243 each act as charge relay system in the active site.

Belongs to the LuxD family.

The protein operates within lipid metabolism; fatty acid reduction for biolumincescence. Acyl transferase is part of the fatty acid reductase system required for aldehyde biosynthesis; it produces fatty acids for the luminescent reaction. The sequence is that of Acyl transferase from Photorhabdus laumondii subsp. laumondii (strain DSM 15139 / CIP 105565 / TT01) (Photorhabdus luminescens subsp. laumondii).